The sequence spans 334 residues: ADP-L-glycero-D-manno-heptose-6-epimerase (334 aa).

NADP(+) is bound by residues 11 to 12 (FI), 32 to 33 (DN), Lys39, Lys54, 77 to 81 (QGACS), and Asn94. The active-site Proton acceptor is Tyr141. Residue Lys145 coordinates NADP(+). Substrate is bound at residue Asn171. Val172 and Lys180 together coordinate NADP(+). The Proton acceptor role is filled by Lys180. Residues Arg182, His189, 203-206 (FGSN), Arg216, and Tyr295 contribute to the substrate site.

Belongs to the NAD(P)-dependent epimerase/dehydratase family. HldD subfamily. As to quaternary structure, homopentamer. The cofactor is NADP(+).

The catalysed reaction is ADP-D-glycero-beta-D-manno-heptose = ADP-L-glycero-beta-D-manno-heptose. It functions in the pathway nucleotide-sugar biosynthesis; ADP-L-glycero-beta-D-manno-heptose biosynthesis; ADP-L-glycero-beta-D-manno-heptose from D-glycero-beta-D-manno-heptose 7-phosphate: step 4/4. The protein operates within bacterial outer membrane biogenesis; LOS core biosynthesis. Functionally, catalyzes the interconversion between ADP-D-glycero-beta-D-manno-heptose and ADP-L-glycero-beta-D-manno-heptose via an epimerization at carbon 6 of the heptose. In Neisseria meningitidis serogroup B (strain ATCC BAA-335 / MC58), this protein is ADP-L-glycero-D-manno-heptose-6-epimerase.